Consider the following 486-residue polypeptide: tRNA sulfurtransferase (486 aa).

A THUMP domain is found at D63–R167. Residues L185–I186, K267, G289, and Q298 contribute to the ATP site. C346 and C460 are oxidised to a cystine. Positions V408–P486 constitute a Rhodanese domain. The active-site Cysteine persulfide intermediate is the C460.

Belongs to the ThiI family.

The protein resides in the cytoplasm. The catalysed reaction is [ThiI sulfur-carrier protein]-S-sulfanyl-L-cysteine + a uridine in tRNA + 2 reduced [2Fe-2S]-[ferredoxin] + ATP + H(+) = [ThiI sulfur-carrier protein]-L-cysteine + a 4-thiouridine in tRNA + 2 oxidized [2Fe-2S]-[ferredoxin] + AMP + diphosphate. The enzyme catalyses [ThiS sulfur-carrier protein]-C-terminal Gly-Gly-AMP + S-sulfanyl-L-cysteinyl-[cysteine desulfurase] + AH2 = [ThiS sulfur-carrier protein]-C-terminal-Gly-aminoethanethioate + L-cysteinyl-[cysteine desulfurase] + A + AMP + 2 H(+). The protein operates within cofactor biosynthesis; thiamine diphosphate biosynthesis. Its function is as follows. Catalyzes the ATP-dependent transfer of a sulfur to tRNA to produce 4-thiouridine in position 8 of tRNAs, which functions as a near-UV photosensor. Also catalyzes the transfer of sulfur to the sulfur carrier protein ThiS, forming ThiS-thiocarboxylate. This is a step in the synthesis of thiazole, in the thiamine biosynthesis pathway. The sulfur is donated as persulfide by IscS. In Shewanella denitrificans (strain OS217 / ATCC BAA-1090 / DSM 15013), this protein is tRNA sulfurtransferase.